The sequence spans 452 residues: Probable glycine dehydrogenase (decarboxylating) subunit 1 (452 aa).

It belongs to the GcvP family. N-terminal subunit subfamily. As to quaternary structure, the glycine cleavage system is composed of four proteins: P, T, L and H. In this organism, the P 'protein' is a heterodimer of two subunits.

It carries out the reaction N(6)-[(R)-lipoyl]-L-lysyl-[glycine-cleavage complex H protein] + glycine + H(+) = N(6)-[(R)-S(8)-aminomethyldihydrolipoyl]-L-lysyl-[glycine-cleavage complex H protein] + CO2. The glycine cleavage system catalyzes the degradation of glycine. The P protein binds the alpha-amino group of glycine through its pyridoxal phosphate cofactor; CO(2) is released and the remaining methylamine moiety is then transferred to the lipoamide cofactor of the H protein. In Alcanivorax borkumensis (strain ATCC 700651 / DSM 11573 / NCIMB 13689 / SK2), this protein is Probable glycine dehydrogenase (decarboxylating) subunit 1.